Here is a 221-residue protein sequence, read N- to C-terminus: Dynein light chain Tctex-type 4 (221 aa).

Disordered stretches follow at residues 1–52 (MASR…SRRG) and 65–87 (NSLV…VPPL). A compositionally biased stretch (basic and acidic residues) spans 10 to 21 (RQEEENAKDSGR). Ser-66 bears the Phosphoserine mark.

Belongs to the dynein light chain Tctex-type family. In terms of assembly, interacts with ENG/endoglin, TGFBR2 and TGFBR3. Interacts with PPP1CC. In terms of tissue distribution, ubiquitously expressed. Expressed in testis (at protein level).

Its subcellular location is the cell projection. The protein resides in the cilium. It localises to the flagellum. The protein localises to the cytoplasmic vesicle. It is found in the secretory vesicle. Its subcellular location is the acrosome. The protein resides in the cytoplasm. It localises to the cytoskeleton. The protein localises to the cilium axoneme. It is found in the nucleus. Its subcellular location is the microtubule organizing center. This is Dynein light chain Tctex-type 4 from Homo sapiens (Human).